A 258-amino-acid chain; its full sequence is Glucanase inhibitor protein 3 (258 aa).

Residues 1-19 form the signal peptide; it reads MKIISAVAASSIALGAVSA. Residues 29–256 enclose the Peptidase S1 domain; it reads VLGGAVVPSG…ALEWINSITK (228 aa). C56 and C72 are oxidised to a cystine. N90, N105, and N110 each carry an N-linked (GlcNAc...) asparagine glycan. 2 cysteine pairs are disulfide-bonded: C180–C192 and C202–C233.

This sequence belongs to the peptidase S1 family. Forms an apoplastic complex with host endoglucanases in tomato leaves during P.infestans infection.

It is found in the secreted. In terms of biological role, secreted effector that suppresses host plant glucan elicitor-mediated defense responses. Targets host endoglucanases and inhibits the endoglucanase-mediated release of elicitor-active glucan oligosaccharides from P.infestans cell walls. The polypeptide is Glucanase inhibitor protein 3 (Phytophthora infestans (Potato late blight agent)).